Reading from the N-terminus, the 215-residue chain is Protein ERP2 (215 aa).

The N-terminal stretch at 1–25 (MIKSTIALPSFFIVLILALVNSVAA) is a signal peptide. The Lumenal segment spans residues 26-182 (SSSYAPVAIS…TVNSTESRLT (157 aa)). A GOLD domain is found at 41–123 (KECLYYDMVT…LKKVEITLEK (83 aa)). Residues 183–203 (WLSILIIIIIAVISIAQVLLI) form a helical membrane-spanning segment. Topologically, residues 204–215 (QFLFTGRQKNYV) are cytoplasmic.

Belongs to the EMP24/GP25L family. Associates with EMP24, ERV25 and ERP1.

The protein localises to the endoplasmic reticulum membrane. Involved in vesicular protein trafficking. The chain is Protein ERP2 (ERP2) from Saccharomyces cerevisiae (strain ATCC 204508 / S288c) (Baker's yeast).